Here is a 161-residue protein sequence, read N- to C-terminus: ATP synthase subunit b 2 (161 aa).

Residues Ile13–Pro33 traverse the membrane as a helical segment.

This sequence belongs to the ATPase B chain family. F-type ATPases have 2 components, F(1) - the catalytic core - and F(0) - the membrane proton channel. F(1) has five subunits: alpha(3), beta(3), gamma(1), delta(1), epsilon(1). F(0) has three main subunits: a(1), b(2) and c(10-14). The alpha and beta chains form an alternating ring which encloses part of the gamma chain. F(1) is attached to F(0) by a central stalk formed by the gamma and epsilon chains, while a peripheral stalk is formed by the delta and b chains.

The protein resides in the cell inner membrane. Its function is as follows. F(1)F(0) ATP synthase produces ATP from ADP in the presence of a proton or sodium gradient. F-type ATPases consist of two structural domains, F(1) containing the extramembraneous catalytic core and F(0) containing the membrane proton channel, linked together by a central stalk and a peripheral stalk. During catalysis, ATP synthesis in the catalytic domain of F(1) is coupled via a rotary mechanism of the central stalk subunits to proton translocation. In terms of biological role, component of the F(0) channel, it forms part of the peripheral stalk, linking F(1) to F(0). The b'-subunit is a diverged and duplicated form of b found in plants and photosynthetic bacteria. This Rhodospirillum rubrum (strain ATCC 11170 / ATH 1.1.1 / DSM 467 / LMG 4362 / NCIMB 8255 / S1) protein is ATP synthase subunit b 2 (atpF2).